The following is a 26-amino-acid chain: MIPAQFTYRRVSSVDEALAAVAEHGD.

As to quaternary structure, heterotrimer composed of an alpha, a beta and a gamma chain. The cofactor is FAD.

The enzyme catalyses an aldehyde + a quinone + H2O = a quinol + a carboxylate + H(+). The polypeptide is Aldehyde dehydrogenase beta chain (Amycolatopsis methanolica).